We begin with the raw amino-acid sequence, 236 residues long: Probable 6-phosphogluconolactonase (236 aa).

It belongs to the glucosamine/galactosamine-6-phosphate isomerase family. 6-phosphogluconolactonase subfamily.

It carries out the reaction 6-phospho-D-glucono-1,5-lactone + H2O = 6-phospho-D-gluconate + H(+). It participates in carbohydrate degradation; pentose phosphate pathway; D-ribulose 5-phosphate from D-glucose 6-phosphate (oxidative stage): step 2/3. Hydrolysis of 6-phosphogluconolactone to 6-phosphogluconate. The polypeptide is Probable 6-phosphogluconolactonase (pgl) (Dictyostelium discoideum (Social amoeba)).